The following is a 250-amino-acid chain: 23S rRNA (guanosine-2'-O-)-methyltransferase RlmB (250 aa).

S-adenosyl-L-methionine contacts are provided by Gly-197, Ile-217, and Met-226.

Belongs to the class IV-like SAM-binding methyltransferase superfamily. RNA methyltransferase TrmH family. RlmB subfamily.

The protein localises to the cytoplasm. It catalyses the reaction guanosine(2251) in 23S rRNA + S-adenosyl-L-methionine = 2'-O-methylguanosine(2251) in 23S rRNA + S-adenosyl-L-homocysteine + H(+). Its function is as follows. Specifically methylates the ribose of guanosine 2251 in 23S rRNA. The chain is 23S rRNA (guanosine-2'-O-)-methyltransferase RlmB from Neisseria meningitidis serogroup B (strain ATCC BAA-335 / MC58).